The chain runs to 352 residues: NAD(P)H oxidoreductase RTN4IP1, mitochondrial (352 aa).

One can recognise an Enoyl reductase (ER) domain in the interval 11-348 (ESLDLLEYKT…NSNSNGKIII (338 aa)). Valine 165, tyrosine 206, alanine 296, and phenylalanine 298 together coordinate NADPH.

It belongs to the zinc-containing alcohol dehydrogenase family. Quinone oxidoreductase subfamily.

The protein resides in the mitochondrion matrix. The catalysed reaction is a quinone + NADH + H(+) = a quinol + NAD(+). It carries out the reaction a quinone + NADPH + H(+) = a quinol + NADP(+). Its pathway is cofactor biosynthesis; ubiquinone biosynthesis. In terms of biological role, NAD(P)H oxidoreductase involved in the ubiquinone biosynthetic pathway. Required for the O-methyltransferase activity of coq3. The chain is NAD(P)H oxidoreductase RTN4IP1, mitochondrial (rtn4ip1) from Dictyostelium discoideum (Social amoeba).